Consider the following 346-residue polypeptide: MVSEAPPFWWTKADWRAYALWPFSWVYGRIAGMRMDRARRATSAVPLICIGNFTVGGAGKTPTAIAIARAARARGLKPAFLSRGYGGSLDVTTVVDPEHHRARDVGDEPLLLAREALTVICRRRVDGARKLAAEGADIIIMDDGFQSARLVFDFALLVVDSGRGIGNGHLVPSGPVRAPIGNQLRHANALLKLGHGSAADPLVRRAARAGKPVYVAETVRTDAGSLDGVKVLAWAGIADPEKFFKTVRETGAVIEETRSFPDHHHFSEDEIADLIDRAASRGYTLVTTAKDMVRLEPGHGRAGELAAKSRVIEIEVRFDDPAAPGKIIDAALASARARRLRERKAG.

Residue 54–61 participates in ATP binding; that stretch reads TVGGAGKT.

It belongs to the LpxK family.

It catalyses the reaction a lipid A disaccharide + ATP = a lipid IVA + ADP + H(+). It functions in the pathway glycolipid biosynthesis; lipid IV(A) biosynthesis; lipid IV(A) from (3R)-3-hydroxytetradecanoyl-[acyl-carrier-protein] and UDP-N-acetyl-alpha-D-glucosamine: step 6/6. Functionally, transfers the gamma-phosphate of ATP to the 4'-position of a tetraacyldisaccharide 1-phosphate intermediate (termed DS-1-P) to form tetraacyldisaccharide 1,4'-bis-phosphate (lipid IVA). This Rhizobium meliloti (strain 1021) (Ensifer meliloti) protein is Tetraacyldisaccharide 4'-kinase.